The chain runs to 852 residues: Glutamine--tRNA ligase (852 aa).

A disordered region spans residues 1-42 (MGAFGWEQDRGAPFSGRSPRILTRMTDAPRPTAGADAPARPP). Residues 1 to 635 (MGAFGWEQDR…ITLKDTWGKQ (635 aa)) form a glutaminyl-tRNA synthetase region. The span at 28 to 38 (APRPTAGADAP) shows a compositional bias: low complexity. Positions 74–84 (PDPSGYAHLGH) match the 'HIGH' region motif. L-glutamine is bound by residues Asp-107 and Tyr-252. Residues 308–312 (ITSKR) carry the 'KMSKS' region motif. Disordered stretches follow at residues 533–562 (EGENADVEDDSAGPAEHEAEPGAGQETAPV) and 632–681 (WGKQ…LTPE). Residues 636–852 (GGGTQQKAEG…LAAALKDALA (217 aa)) form a gatB-like region. Residues 664–675 (SSSPAKAHAPKA) show a composition bias toward low complexity.

It in the N-terminal section; belongs to the class-I aminoacyl-tRNA synthetase family. This sequence in the C-terminal section; belongs to the GatB/GatE family. In terms of assembly, monomer.

It localises to the cytoplasm. It carries out the reaction tRNA(Gln) + L-glutamine + ATP = L-glutaminyl-tRNA(Gln) + AMP + diphosphate. The protein is Glutamine--tRNA ligase of Deinococcus radiodurans (strain ATCC 13939 / DSM 20539 / JCM 16871 / CCUG 27074 / LMG 4051 / NBRC 15346 / NCIMB 9279 / VKM B-1422 / R1).